The sequence spans 29 residues: Histone H2B (29 aa).

The interval 1 to 29 (MPEPAKSAPKKGSTRTAAKGGKKRRKSRK) is disordered. N6-acetyllysine is present on residues Lys-6 and Lys-11. Ser-13 carries the post-translational modification Phosphoserine. The segment covering 20–29 (GGKKRRKSRK) has biased composition (basic residues).

It belongs to the histone H2B family. In terms of assembly, the nucleosome is a histone octamer containing two molecules each of H2A, H2B, H3 and H4 assembled in one H3-H4 heterotetramer and two H2A-H2B heterodimers. The octamer wraps approximately 147 bp of DNA. Monoubiquitination at the C-terminal Lys gives a specific tag for epigenetic transcriptional activation and is also prerequisite for histone H3 'Lys-4' and 'Lys-79' methylation. Post-translationally, phosphorylated during apoptosis; which facilitates apoptotic chromatin condensation.

It is found in the nucleus. Its subcellular location is the chromosome. Functionally, core component of nucleosome. Nucleosomes wrap and compact DNA into chromatin, limiting DNA accessibility to the cellular machineries which require DNA as a template. Histones thereby play a central role in transcription regulation, DNA repair, DNA replication and chromosomal stability. DNA accessibility is regulated via a complex set of post-translational modifications of histones, also called histone code, and nucleosome remodeling. The protein is Histone H2B of Cyprinus carpio (Common carp).